The chain runs to 269 residues: Lysyl endopeptidase (269 aa).

3 disulfides stabilise this stretch: Cys-6–Cys-216, Cys-12–Cys-80, and Cys-36–Cys-58. Catalysis depends on charge relay system residues His-57, Asp-113, and Ser-194.

The protein belongs to the peptidase S1 family.

The protein localises to the secreted. The enzyme catalyses Preferential cleavage: Lys-|-Xaa, including Lys-|-Pro.. In terms of biological role, highly specific endopeptidase that hydrolyzes lysyl bonds including the Lys-Pro bond. The protein is Lysyl endopeptidase of Lysobacter enzymogenes.